The chain runs to 181 residues: Protein CRABS CLAW (181 aa).

The C4-type zinc-finger motif lies at 26 to 53; sequence CSICNTILAVGIPLKRMLDTVTVKCGHC. The tract at residues 80-122 is disordered; that stretch reads GSDYKKGSSSSSSSSTSSDQPPSPSPPFVVKPPEKKQRLPSAY. Residues 87–99 show a composition bias toward low complexity; it reads SSSSSSSSTSSDQ. The segment covering 100-109 has biased composition (pro residues); sequence PPSPSPPFVV.

It belongs to the YABBY family. As to expression, restricted to flowers, mostly in carpels and nectaries. Expressed at low levels in sepal primordia (buds), sepal receptacle and developing petal. Not detected in placental tissues, septum, stigma and ovules.

The protein resides in the nucleus. In terms of biological role, transcription factor required for the initiation of nectary development. Also involved in suppressing early radial growth of the gynoecium, in promoting its later elongation and in fusion of its carpels by regulating both cell division and expansion. Establishes the polar differentiation in the carpels by specifying abaxial cell fate in the ovary wall. Regulates both cell division and expansion. The sequence is that of Protein CRABS CLAW from Arabidopsis thaliana (Mouse-ear cress).